A 115-amino-acid polypeptide reads, in one-letter code: 5-hydroxyisourate hydrolase (115 aa).

Residues 1–23 (MSGLTTHILDQASGKPAAGVGVR) form a disordered region. Substrate is bound by residues histidine 7, arginine 45, and tyrosine 112.

This sequence belongs to the transthyretin family. 5-hydroxyisourate hydrolase subfamily. Homotetramer.

The enzyme catalyses 5-hydroxyisourate + H2O = 5-hydroxy-2-oxo-4-ureido-2,5-dihydro-1H-imidazole-5-carboxylate + H(+). Functionally, catalyzes the hydrolysis of 5-hydroxyisourate (HIU) to 2-oxo-4-hydroxy-4-carboxy-5-ureidoimidazoline (OHCU). This Caulobacter vibrioides (strain ATCC 19089 / CIP 103742 / CB 15) (Caulobacter crescentus) protein is 5-hydroxyisourate hydrolase.